Reading from the N-terminus, the 180-residue chain is Large ribosomal subunit protein uL5c (180 aa).

The protein belongs to the universal ribosomal protein uL5 family. Part of the 50S ribosomal subunit; contacts the 5S rRNA.

The protein resides in the plastid. It is found in the chloroplast. In terms of biological role, binds 5S rRNA, forms part of the central protuberance of the 50S subunit. In Chlorella vulgaris (Green alga), this protein is Large ribosomal subunit protein uL5c (rpl5).